We begin with the raw amino-acid sequence, 457 residues long: ERV-H1 provirus ancestral Env polyprotein (457 aa).

An N-terminal signal peptide occupies residues 1 to 35; it reads MIFAGKAPSNTSTLMKFYSLILYSLLFSFPFLCHP. N-linked (GlcNAc...) asparagine glycosylation is found at asparagine 10 and asparagine 47. Positions 64-67 match the CXXC motif; the sequence is CWLC. N-linked (GlcNAc...) asparagine glycosylation is found at asparagine 197, asparagine 222, asparagine 265, asparagine 283, asparagine 352, and asparagine 370. The segment at 388–408 is fusion peptide; that stretch reads VIPLIPLMFGLGLSASTIALS.

The protein belongs to the gamma type-C retroviral envelope protein family. HERV class-I H env subfamily. As to quaternary structure, the surface (SU) and transmembrane (TM) proteins form a heterodimer. SU and TM are attached by noncovalent interactions or by a labile interchain disulfide bond. Post-translationally, specific enzymatic cleavages in vivo yield the mature SU and TM proteins. In terms of processing, the CXXC motif is highly conserved across a broad range of retroviral envelope proteins. It is thought to participate in the formation of a labile disulfide bond possibly with the CX6CC motif present in the transmembrane protein.

Its subcellular location is the virion. Functionally, retroviral envelope proteins mediate receptor recognition and membrane fusion during early infection. Endogenous envelope proteins may have kept, lost or modified their original function during evolution. Its function is as follows. SU mediates receptor recognition. In terms of biological role, TM anchors the envelope heterodimer to the viral membrane through one transmembrane domain. The other hydrophobic domain, called fusion peptide, mediates fusion of the viral membrane with the target cell membrane. In Pan troglodytes (Chimpanzee), this protein is ERV-H1 provirus ancestral Env polyprotein.